We begin with the raw amino-acid sequence, 1171 residues long: ATP-dependent helicase/deoxyribonuclease subunit B (1171 aa).

The region spanning methionine 1–histidine 287 is the UvrD-like helicase ATP-binding domain. Position 8-15 (glycine 8–serine 15) interacts with ATP. Residues methionine 281–aspartate 587 enclose the UvrD-like helicase C-terminal domain. 4 residues coordinate [4Fe-4S] cluster: cysteine 805, cysteine 1129, cysteine 1132, and cysteine 1138.

The protein belongs to the helicase family. AddB/RexB type 1 subfamily. In terms of assembly, heterodimer of AddA and AddB. It depends on Mg(2+) as a cofactor. The cofactor is [4Fe-4S] cluster.

Functionally, the heterodimer acts as both an ATP-dependent DNA helicase and an ATP-dependent, dual-direction single-stranded exonuclease. Recognizes the chi site generating a DNA molecule suitable for the initiation of homologous recombination. The AddB subunit has 5' -&gt; 3' nuclease activity but not helicase activity. The polypeptide is ATP-dependent helicase/deoxyribonuclease subunit B (Bacillus cereus (strain G9842)).